The chain runs to 441 residues: Peroxisomal multifunctional enzyme A (441 aa).

The 3-hydroxyacyl-CoA dehydrogenase stretch occupies residues M1–S302. NAD(+) contacts are provided by residues I11–V35, I19, D38, S73–V74, and N97. S149 provides a ligand contact to substrate. The Proton acceptor role is filled by Y162. Residues Y162 to K166 and A194 to R197 each bind NAD(+). The SCP2 domain occupies A331–K440. Residue Q412 participates in substrate binding.

The protein belongs to the short-chain dehydrogenases/reductases (SDR) family.

It localises to the peroxisome. It catalyses the reaction a (3S)-3-hydroxyacyl-CoA + NAD(+) = a 3-oxoacyl-CoA + NADH + H(+). It participates in lipid metabolism; fatty acid beta-oxidation. Enzyme acting on the peroxisomal beta-oxidation pathway for fatty acids. Protects the cells from the increase of the harmful xenobiotic fatty acids incorporated from their diets and optimizes cellular lipid composition for proper development. The polypeptide is Peroxisomal multifunctional enzyme A (mfeA) (Dictyostelium discoideum (Social amoeba)).